The following is a 688-amino-acid chain: Glycine--tRNA ligase beta subunit (688 aa).

This sequence belongs to the class-II aminoacyl-tRNA synthetase family. As to quaternary structure, tetramer of two alpha and two beta subunits.

Its subcellular location is the cytoplasm. It catalyses the reaction tRNA(Gly) + glycine + ATP = glycyl-tRNA(Gly) + AMP + diphosphate. In Listeria monocytogenes serovar 1/2a (strain ATCC BAA-679 / EGD-e), this protein is Glycine--tRNA ligase beta subunit.